Here is a 382-residue protein sequence, read N- to C-terminus: Lipid-A-disaccharide synthase (382 aa).

It belongs to the LpxB family.

The enzyme catalyses 2-N,3-O-bis[(3R)-3-hydroxytetradecanoyl]-alpha-D-glucosaminyl 1-phosphate + UDP-2-N,3-O-bis[(3R)-3-hydroxytetradecanoyl]-alpha-D-glucosamine = lipid A disaccharide (E. coli) + UDP + H(+). The catalysed reaction is a lipid X + a UDP-2-N,3-O-bis[(3R)-3-hydroxyacyl]-alpha-D-glucosamine = a lipid A disaccharide + UDP + H(+). It functions in the pathway glycolipid biosynthesis; lipid IV(A) biosynthesis; lipid IV(A) from (3R)-3-hydroxytetradecanoyl-[acyl-carrier-protein] and UDP-N-acetyl-alpha-D-glucosamine: step 5/6. Condensation of UDP-2,3-diacylglucosamine and 2,3-diacylglucosamine-1-phosphate to form lipid A disaccharide, a precursor of lipid A, a phosphorylated glycolipid that anchors the lipopolysaccharide to the outer membrane of the cell. This is Lipid-A-disaccharide synthase from Escherichia fergusonii (strain ATCC 35469 / DSM 13698 / CCUG 18766 / IAM 14443 / JCM 21226 / LMG 7866 / NBRC 102419 / NCTC 12128 / CDC 0568-73).